We begin with the raw amino-acid sequence, 449 residues long: Adenylosuccinate synthetase isozyme 1 A (449 aa).

Positions 1-10 (MSHKSCYTNP) are enriched in polar residues. The tract at residues 1 to 22 (MSHKSCYTNPGTGGKRPRNDKG) is disordered. Residues 34–40 (GDEGKGK) and 62–64 (GHT) each bind GTP. Residue Asp-35 is the Proton acceptor of the active site. Positions 35 and 62 each coordinate Mg(2+). Asp-35 contacts substrate. IMP is bound by residues 35-38 (DEGK), 60-63 (NAGH), Thr-155, Arg-169, Asn-248, Thr-263, and Arg-327. His-63 (proton donor) is an active-site residue. A substrate-binding site is contributed by 323–329 (VTTGRKR). GTP is bound by residues Arg-329, 355-357 (KLD), and 437-440 (GVGK).

It belongs to the adenylosuccinate synthetase family. As to quaternary structure, homodimer. It depends on Mg(2+) as a cofactor.

The protein resides in the cytoplasm. The enzyme catalyses IMP + L-aspartate + GTP = N(6)-(1,2-dicarboxyethyl)-AMP + GDP + phosphate + 2 H(+). It functions in the pathway purine metabolism; AMP biosynthesis via de novo pathway; AMP from IMP: step 1/2. Functionally, component of the purine nucleotide cycle (PNC), which interconverts IMP and AMP to regulate the nucleotide levels in various tissues, and which contributes to glycolysis and ammoniagenesis. Catalyzes the first committed step in the biosynthesis of AMP from IMP. This is Adenylosuccinate synthetase isozyme 1 A (adss1a) from Salmo salar (Atlantic salmon).